Here is a 272-residue protein sequence, read N- to C-terminus: Probable glutathione S-transferase DHAR2, chloroplastic (272 aa).

The transit peptide at 1–57 (MAVLLRTTTSATTATSGGSSSATALLATTFRRGGRRLLLLPATRGSAPRRAALLTAR) directs the protein to the chloroplast. 2 residues coordinate glutathione: K68 and D79. L-ascorbate is bound by residues K68 and D79. The GST N-terminal domain maps to 70–148 (SLTVPDRLGD…AIEEKYPEPS (79 aa)). Residue C80 is the Nucleophile of the active site. The glutathione site is built by K107, V120, S133, H219, and W266. The 147-residue stretch at 126-272 (EEQWVADSDV…IAGWRPKVMG (147 aa)) folds into the GST C-terminal domain. Position 269 (K269) interacts with L-ascorbate.

Belongs to the GST superfamily. DHAR family. As to quaternary structure, monomer.

It is found in the plastid. It localises to the chloroplast. The enzyme catalyses RX + glutathione = an S-substituted glutathione + a halide anion + H(+). It catalyses the reaction L-dehydroascorbate + 2 glutathione = glutathione disulfide + L-ascorbate. Involved in ascorbate homeostasis. Maintains redox pools of ascorbate by recycling dihydroascorbate (DHA) to ascorbate. Involved in scavenging reactive oxygen species (ROS) under oxidative stresses. The protein is Probable glutathione S-transferase DHAR2, chloroplastic of Oryza sativa subsp. japonica (Rice).